The following is a 230-amino-acid chain: Probable methylthioribulose-1-phosphate dehydratase (230 aa).

Residue cysteine 87 coordinates substrate. Zn(2+) contacts are provided by histidine 105 and histidine 107. The Proton donor/acceptor role is filled by glutamate 129. Residue histidine 185 coordinates Zn(2+).

Belongs to the aldolase class II family. MtnB subfamily. Zn(2+) serves as cofactor.

It localises to the cytoplasm. It catalyses the reaction 5-(methylsulfanyl)-D-ribulose 1-phosphate = 5-methylsulfanyl-2,3-dioxopentyl phosphate + H2O. The protein operates within amino-acid biosynthesis; L-methionine biosynthesis via salvage pathway; L-methionine from S-methyl-5-thio-alpha-D-ribose 1-phosphate: step 2/6. Catalyzes the dehydration of methylthioribulose-1-phosphate (MTRu-1-P) into 2,3-diketo-5-methylthiopentyl-1-phosphate (DK-MTP-1-P). This Drosophila pseudoobscura pseudoobscura (Fruit fly) protein is Probable methylthioribulose-1-phosphate dehydratase.